The chain runs to 116 residues: Large ribosomal subunit protein bL19 (116 aa).

It belongs to the bacterial ribosomal protein bL19 family.

Functionally, this protein is located at the 30S-50S ribosomal subunit interface and may play a role in the structure and function of the aminoacyl-tRNA binding site. This is Large ribosomal subunit protein bL19 from Geobacillus sp. (strain WCH70).